The chain runs to 698 residues: Polyribonucleotide nucleotidyltransferase (698 aa).

2 residues coordinate Mg(2+): D486 and D492. Residues 553 to 612 (PRIIVRNIPKDRIGELIGPGGKNVRGISELTGAELYIEDDGKVTISGSNQESAEKAAKMV) form the KH domain. The S1 motif domain maps to 622-690 (GKIYEGKVKR…KTGKIDLSRK (69 aa)).

This sequence belongs to the polyribonucleotide nucleotidyltransferase family. Mg(2+) serves as cofactor.

The protein resides in the cytoplasm. The enzyme catalyses RNA(n+1) + phosphate = RNA(n) + a ribonucleoside 5'-diphosphate. Its function is as follows. Involved in mRNA degradation. Catalyzes the phosphorolysis of single-stranded polyribonucleotides processively in the 3'- to 5'-direction. The protein is Polyribonucleotide nucleotidyltransferase of Leptospira interrogans serogroup Icterohaemorrhagiae serovar copenhageni (strain Fiocruz L1-130).